We begin with the raw amino-acid sequence, 342 residues long: Mitogen-activated protein kinase kinase kinase 20 (342 aa).

The Protein kinase domain occupies 3-268 (WVRGETIGFG…AEMLLNHSFV (266 aa)). ATP is bound at residue 9-17 (IGFGTFSTV). Ser18 bears the Phosphoserine mark. Phosphothreonine is present on Thr19. Residue Lys36 participates in ATP binding. A phosphotyrosine mark is found at Tyr41 and Tyr66. A phosphoserine mark is found at Ser93 and Ser114. Catalysis depends on Asp131, which acts as the Proton acceptor. Residues 285–342 (KDEDKVLMSPKCPFEFDDWDSFTLDSNPSFDSPVERLGSLVSGSIPDWSVGGSWLTVR) are required for MKK3 binding.

This sequence belongs to the protein kinase superfamily. Ser/Thr protein kinase family. Interacts with MKK3 and MPK18 via its C-terminal domain. Binds to MKK5. Autophosphorylates; active in phosphorylated state. Dephosphorylated by ABI1. In terms of tissue distribution, expressed in roots, seedlings, leaves, flower buds, flowers and siliques.

Its subcellular location is the nucleus. The protein resides in the cytoplasm. It catalyses the reaction L-seryl-[protein] + ATP = O-phospho-L-seryl-[protein] + ADP + H(+). It carries out the reaction L-threonyl-[protein] + ATP = O-phospho-L-threonyl-[protein] + ADP + H(+). With respect to regulation, activated through serine, threonine and tyrosine phosphorylation, especially upon abscisic acid (ABA) treatment. Restricted activity by ABI1-mediated dephosphorylation. Functionally, mitogen-activated protein kinase kinase (MAPKK) that phosphorylates both MKK3 and MPK18 and regulate two separate signaling pathways involved in root microtubule functions. MAPKK which regulates abscisic acid (ABA) responses in a MAPKKK20-MKK5-MPK6 cascade involved in root growth (e.g. root cell division and elongation) and stomatal response, probably via MKK5 activation by protein phosphorylation and subsequent activation of MAPK6 by MKK5. Involved in various abiotic stresses (e.g. osmotic stress, cold and hydrogen peroxide) responses by phosphorylating and thus regulating MPK6 activity, in an ABA-independent manner. This is Mitogen-activated protein kinase kinase kinase 20 from Arabidopsis thaliana (Mouse-ear cress).